The following is a 257-amino-acid chain: Pyridoxine 5'-phosphate synthase (257 aa).

Asn16 serves as a coordination point for 3-amino-2-oxopropyl phosphate. Asp18–His19 is a 1-deoxy-D-xylulose 5-phosphate binding site. Position 27 (Arg27) interacts with 3-amino-2-oxopropyl phosphate. Residue His52 is the Proton acceptor of the active site. The 1-deoxy-D-xylulose 5-phosphate site is built by Arg54 and His59. The Proton acceptor role is filled by Glu79. A 1-deoxy-D-xylulose 5-phosphate-binding site is contributed by Thr109. His200 (proton donor) is an active-site residue. 3-amino-2-oxopropyl phosphate contacts are provided by residues Gly201 and Gly222–His223.

Belongs to the PNP synthase family. As to quaternary structure, homooctamer; tetramer of dimers.

It is found in the cytoplasm. The enzyme catalyses 3-amino-2-oxopropyl phosphate + 1-deoxy-D-xylulose 5-phosphate = pyridoxine 5'-phosphate + phosphate + 2 H2O + H(+). Its pathway is cofactor biosynthesis; pyridoxine 5'-phosphate biosynthesis; pyridoxine 5'-phosphate from D-erythrose 4-phosphate: step 5/5. Catalyzes the complicated ring closure reaction between the two acyclic compounds 1-deoxy-D-xylulose-5-phosphate (DXP) and 3-amino-2-oxopropyl phosphate (1-amino-acetone-3-phosphate or AAP) to form pyridoxine 5'-phosphate (PNP) and inorganic phosphate. This is Pyridoxine 5'-phosphate synthase from Burkholderia pseudomallei (strain 1710b).